The following is a 359-amino-acid chain: Peptide chain release factor 1 (359 aa).

At Gln234 the chain carries N5-methylglutamine. A disordered region spans residues 283–305 (SQKDAARAADRRAQVGSGDRSER).

Belongs to the prokaryotic/mitochondrial release factor family. In terms of processing, methylated by PrmC. Methylation increases the termination efficiency of RF1.

Its subcellular location is the cytoplasm. Functionally, peptide chain release factor 1 directs the termination of translation in response to the peptide chain termination codons UAG and UAA. This Methylobacterium sp. (strain 4-46) protein is Peptide chain release factor 1.